Consider the following 852-residue polypeptide: Leucine--tRNA ligase (852 aa).

A 'HIGH' region motif is present at residues 51–61 (PYPSGDLHMGH). The short motif at 615–619 (KMSKS) is the 'KMSKS' region element. Lys-618 provides a ligand contact to ATP.

The protein belongs to the class-I aminoacyl-tRNA synthetase family.

Its subcellular location is the cytoplasm. It catalyses the reaction tRNA(Leu) + L-leucine + ATP = L-leucyl-tRNA(Leu) + AMP + diphosphate. The chain is Leucine--tRNA ligase from Clavibacter sepedonicus (Clavibacter michiganensis subsp. sepedonicus).